The following is a 568-amino-acid chain: Sulfite reductase [NADPH] hemoprotein beta-component (568 aa).

4 residues coordinate [4Fe-4S] cluster: C426, C432, C471, and C475. C475 contacts siroheme.

It belongs to the nitrite and sulfite reductase 4Fe-4S domain family. Alpha(8)-beta(8). The alpha component is a flavoprotein, the beta component is a hemoprotein. It depends on siroheme as a cofactor. The cofactor is [4Fe-4S] cluster.

The catalysed reaction is hydrogen sulfide + 3 NADP(+) + 3 H2O = sulfite + 3 NADPH + 4 H(+). It participates in sulfur metabolism; hydrogen sulfide biosynthesis; hydrogen sulfide from sulfite (NADPH route): step 1/1. Functionally, component of the sulfite reductase complex that catalyzes the 6-electron reduction of sulfite to sulfide. This is one of several activities required for the biosynthesis of L-cysteine from sulfate. In Xylella fastidiosa (strain M12), this protein is Sulfite reductase [NADPH] hemoprotein beta-component.